A 201-amino-acid polypeptide reads, in one-letter code: Small ribosomal subunit protein uS2 (201 aa).

Belongs to the universal ribosomal protein uS2 family.

This is Small ribosomal subunit protein uS2 from Nanoarchaeum equitans (strain Kin4-M).